A 485-amino-acid polypeptide reads, in one-letter code: Pyruvate kinase (485 aa).

Arg-33 provides a ligand contact to substrate. K(+)-binding residues include Asn-35, Ser-37, Asp-67, and Thr-68. An ATP-binding site is contributed by Asn-35 to His-38. Arg-74 and Lys-155 together coordinate ATP. Glu-221 lines the Mg(2+) pocket. Positions 244, 245, and 277 each coordinate substrate. Residue Asp-245 participates in Mg(2+) binding.

It belongs to the pyruvate kinase family. In terms of assembly, homotetramer. Mg(2+) serves as cofactor. Requires K(+) as cofactor.

It carries out the reaction pyruvate + ATP = phosphoenolpyruvate + ADP + H(+). It participates in carbohydrate degradation; glycolysis; pyruvate from D-glyceraldehyde 3-phosphate: step 5/5. The protein is Pyruvate kinase (pyk) of Chlamydia trachomatis serovar D (strain ATCC VR-885 / DSM 19411 / UW-3/Cx).